The chain runs to 97 residues: Histone H1.C2 (97 aa).

The interval 24 to 97 (AAVPPKKAAP…KKAVKKAPKK (74 aa)) is disordered. Residues 31-97 (AAPKKAVAKK…KKAVKKAPKK (67 aa)) are compositionally biased toward basic residues.

The protein localises to the nucleus. The protein resides in the chromosome. The chain is Histone H1.C2 from Trypanosoma cruzi.